We begin with the raw amino-acid sequence, 264 residues long: MRIALGIEYNGTNYFGWQRQREVKSVQEELEKALSIVANHPVEVQCAGRTDAGVHGTGQVVHFDTNVNRKMVAWTMGANANMPSDIAVRWAKEVPDDFHARFSATARRYRYIIFNHALRPGILNSGVSHYHGELDEKKMHEAGQYLLGENDFSSFRAAHCQSLSPCRNLMHLNVTRHGDYVVIDIKANAFVHHMVRNITGSLIKVGRGEEKPEWIKWLLEAKDRKLAGATAKAEGLYLVDVDYPEEFELPCVPIGPLFLPDNLN.

Asp-51 (nucleophile) is an active-site residue. Tyr-109 is a binding site for substrate.

The protein belongs to the tRNA pseudouridine synthase TruA family. In terms of assembly, homodimer.

It catalyses the reaction uridine(38/39/40) in tRNA = pseudouridine(38/39/40) in tRNA. Its function is as follows. Formation of pseudouridine at positions 38, 39 and 40 in the anticodon stem and loop of transfer RNAs. The protein is tRNA pseudouridine synthase A of Vibrio parahaemolyticus serotype O3:K6 (strain RIMD 2210633).